The sequence spans 759 residues: MSKRLRSSEVCADCSGPDPSWASVNRGTFLCDECCSVHRSLGRHISQVRHLKHTPWPPTLLQMVETLYNNGANSIWEHSLLDPASIMSGRRKANPQDKVHPNKAEFIRAKYQMLAFVHRLPCRDDDSVTAKDLSKQLHSSVRTGNLETCLRLLSLGAQANFFHPEKGNTPLHVASKAGQILQAELLAVYGADPGTQDSSGKTPVDYARQGGHHELAERLVEIQYELTDRLAFYLCGRKPDHKNGQHFIIPQMADSSLDLSELAKAAKKKLQSLSNHLFEELAMDVYDEVDRRETDAVWLATQNHSALVTETTVVPFLPVNPEYSSTRNQGRQKLARFNAHEFATLVIDILSDAKRRQQGSSLSGSKDNVELILKTINNQHSVESQDNDQPDYDSVASDEDTDLETTASKTNRQKSLDSDLSDGPVTVQEFMEVKNALVASEAKIQQLMKVNNNLSDELRIMQKKLQTLQSENSNLRKQATTNVYQVQTGSEYTDTSNHSSLKRRPSARGSRPMSMYETGSGQKPYLPMGEASRPEESRMRLQPFPAHIGRSALVTSSSSLPSFPSTLSWSRDESARRASRLEKQNSTPESDYDNTPNDMEPDGMGSSRKGRQRSMVWPGDGLVPDTAEPHVAPSPTLPSTEDVIRKTEQITKNIQELLRAAQENKHDSYIPCSERIHVAVTEMAALFPKKPKSDMVRTSLRLLTSSAYRLQSECKKTLPGDPGSPTDVQLVTQQVIQCAYDIAKAAKQLVTITTKENNN.

The region spanning 1 to 124 is the Arf-GAP domain; sequence MSKRLRSSEV…AFVHRLPCRD (124 aa). The C4-type zinc-finger motif lies at 11–34; sequence CADCSGPDPSWASVNRGTFLCDEC. 3 ANK repeats span residues 132–161, 166–195, and 199–228; these read DLSK…QANF, KGNT…DPGT, and SGKT…ELTD. The segment at 379–422 is disordered; that stretch reads QHSVESQDNDQPDYDSVASDEDTDLETTASKTNRQKSLDSDLSD. Acidic residues predominate over residues 385–403; that stretch reads QDNDQPDYDSVASDEDTDL. A phosphoserine mark is found at serine 394 and serine 397. Threonine 401 carries the post-translational modification Phosphothreonine. Residues serine 415, serine 418, and serine 421 each carry the phosphoserine modification. Residues 437-478 adopt a coiled-coil conformation; it reads LVASEAKIQQLMKVNNNLSDELRIMQKKLQTLQSENSNLRKQ. A compositionally biased stretch (polar residues) spans 480–499; sequence TTNVYQVQTGSEYTDTSNHS. Disordered stretches follow at residues 480 to 538 and 554 to 643; these read TTNV…EESR and VTSS…TEDV. Tyrosine 484 is modified (phosphotyrosine). Residues 555-569 show a composition bias toward low complexity; sequence TSSSSLPSFPSTLSW. Phosphoserine is present on residues serine 559, serine 562, and serine 570. Over residues 570–583 the composition is skewed to basic and acidic residues; that stretch reads SRDESARRASRLEK. Residues 584 to 597 show a composition bias toward polar residues; sequence QNSTPESDYDNTPN. Threonine 587 is modified (phosphothreonine). The residue at position 614 (serine 614) is a Phosphoserine.

As to quaternary structure, may form heterooligomers with GIT1. Directly interacts with protein Piccolo/PCLO. Interacts with PPFIA1 and PPFIA2. Interacts with ARHGEF7. Identified in a complex with ARHGEF6 and BIN2. Interacts with PAK3. Interacts with PXN/paxillin. Interacts with TGFB1I1. Forms a complex with EFNB1 and GRB4/NCK2.

Its function is as follows. GTPase-activating protein for ADP ribosylation factor family members, including ARF1. The polypeptide is ARF GTPase-activating protein GIT2 (GIT2) (Homo sapiens (Human)).